Here is a 716-residue protein sequence, read N- to C-terminus: Myogenesis-regulating glycosidase (716 aa).

Polar residues predominate over residues 1-11 (MSQNLQETSQA). Positions 1–26 (MSQNLQETSQAYPRHRPGSHAGPKSL) are disordered. Topologically, residues 1-55 (MSQNLQETSQAYPRHRPGSHAGPKSLKVTPRATMYTFLPDNFSPAKPKPTKELRP) are cytoplasmic. A helical; Signal-anchor for type II membrane protein membrane pass occupies residues 56-76 (LLCSAVLGLLLVLAAVVAWCY). Residues 77–716 (YSASLRKAER…DEVAYFTWAS (640 aa)) lie on the Extracellular side of the membrane. Residues asparagine 239, asparagine 249, and asparagine 455 are each glycosylated (N-linked (GlcNAc...) asparagine). Active-site residues include aspartate 462 and glutamate 465. Catalysis depends on aspartate 527, which acts as the Proton donor.

It belongs to the glycosyl hydrolase 31 family. As to quaternary structure, interacts with IGF2; this interaction is required for IGF2 secretion. As to expression, expressed in brain, liver, spleen, skeletal muscle, heart, lung and kidney. High expression is observed in the cerebellum, specifically in astrocytes. Highly expressed in skeletal muscle (at protein level).

Its subcellular location is the nucleus membrane. The protein localises to the endoplasmic reticulum membrane. In terms of biological role, putative glycosidase. Promotes myogenesis by activating AKT signaling through the maturation and secretion of IGF2. The polypeptide is Myogenesis-regulating glycosidase (Myorg) (Mus musculus (Mouse)).